The chain runs to 26 residues: Cytochrome c oxidase subunit 2 (26 aa).

Belongs to the cytochrome c oxidase subunit 2 family. Component of the cytochrome c oxidase (complex IV, CIV), a multisubunit enzyme composed of a catalytic core of 3 subunits and several supernumerary subunits. The complex exists as a monomer or a dimer and forms supercomplexes (SCs) in the inner mitochondrial membrane with ubiquinol-cytochrome c oxidoreductase (cytochrome b-c1 complex, complex III, CIII). It depends on Cu cation as a cofactor.

Its subcellular location is the mitochondrion inner membrane. It catalyses the reaction 4 Fe(II)-[cytochrome c] + O2 + 8 H(+)(in) = 4 Fe(III)-[cytochrome c] + 2 H2O + 4 H(+)(out). Component of the cytochrome c oxidase, the last enzyme in the mitochondrial electron transport chain which drives oxidative phosphorylation. The respiratory chain contains 3 multisubunit complexes succinate dehydrogenase (complex II, CII), ubiquinol-cytochrome c oxidoreductase (cytochrome b-c1 complex, complex III, CIII) and cytochrome c oxidase (complex IV, CIV), that cooperate to transfer electrons derived from NADH and succinate to molecular oxygen, creating an electrochemical gradient over the inner membrane that drives transmembrane transport and the ATP synthase. Cytochrome c oxidase is the component of the respiratory chain that catalyzes the reduction of oxygen to water. Electrons originating from reduced cytochrome c in the intermembrane space (IMS) are transferred via the dinuclear copper A center (CU(A)) of subunit 2 and heme A of subunit 1 to the active site in subunit 1, a binuclear center (BNC) formed by heme A3 and copper B (CU(B)). The BNC reduces molecular oxygen to 2 water molecules using 4 electrons from cytochrome c in the IMS and 4 protons from the mitochondrial matrix. The chain is Cytochrome c oxidase subunit 2 (COX2) from Solanum tuberosum (Potato).